The sequence spans 405 residues: MKTYIVGGAVRDRLLGLPVRDRDWVVTGETPESMRRRGFRPVGRDFPVFLHPDTHEEYALARTERKTARGYHGFSFHAAPDVTLEADLARRDLTINAMAEDENGELVDPFNGRQDLAAGILRHVGEAFVEDPVRILRIARFAARFGFSIAEDTQNLMRFMVDDGEVDHLVPERVWQELSKGLMEAQPSRFFTVLRDCGALARILPEVDALWGVPQRADYHPEVDTGVHAMLVLDQSARDGLGLAARFAALCHDLGKALTPAELLPRHSGHEGRGEAPTRALCERLRVPAECRDLALLTVSFHSHIHRIRELRPDTVLRLLRECDALRRPARFDDLLAVCRCDAHGRPGHEQDAYPQIAIARRYLDAAQSVNAGDIARQTPDKSTIPYRIDAARLCAIEAAKRQIS.

ATP-binding residues include Gly-8 and Arg-11. The CTP site is built by Gly-8 and Arg-11. 2 residues coordinate Mg(2+): Asp-21 and Asp-23. 3 residues coordinate ATP: Arg-91, Arg-137, and Arg-140. CTP is bound by residues Arg-91, Arg-137, and Arg-140. The region spanning 225-326 (TGVHAMLVLD…LRLLRECDAL (102 aa)) is the HD domain.

The protein belongs to the tRNA nucleotidyltransferase/poly(A) polymerase family. Bacterial CCA-adding enzyme type 1 subfamily. As to quaternary structure, monomer. Can also form homodimers and oligomers. Mg(2+) is required as a cofactor. Ni(2+) serves as cofactor.

It catalyses the reaction a tRNA precursor + 2 CTP + ATP = a tRNA with a 3' CCA end + 3 diphosphate. It carries out the reaction a tRNA with a 3' CCA end + 2 CTP + ATP = a tRNA with a 3' CCACCA end + 3 diphosphate. Catalyzes the addition and repair of the essential 3'-terminal CCA sequence in tRNAs without using a nucleic acid template. Adds these three nucleotides in the order of C, C, and A to the tRNA nucleotide-73, using CTP and ATP as substrates and producing inorganic pyrophosphate. tRNA 3'-terminal CCA addition is required both for tRNA processing and repair. Also involved in tRNA surveillance by mediating tandem CCA addition to generate a CCACCA at the 3' terminus of unstable tRNAs. While stable tRNAs receive only 3'-terminal CCA, unstable tRNAs are marked with CCACCA and rapidly degraded. The protein is Multifunctional CCA protein of Laribacter hongkongensis (strain HLHK9).